A 353-amino-acid polypeptide reads, in one-letter code: GTPase Obg (353 aa).

Residues 1 to 159 form the Obg domain; sequence MKFLDEAKVY…RWIWLRLKLI (159 aa). The region spanning 160–327 is the OBG-type G domain; it reads ADAGLVGLPN…VLRALVAVIG (168 aa). Residues 166–173, 191–195, 212–215, 279–282, and 308–310 contribute to the GTP site; these read GLPNAGKS, FTTLH, DIPG, NKID, and SGV. Residues serine 173 and threonine 193 each coordinate Mg(2+).

The protein belongs to the TRAFAC class OBG-HflX-like GTPase superfamily. OBG GTPase family. In terms of assembly, monomer. Mg(2+) is required as a cofactor.

Its subcellular location is the cytoplasm. Its function is as follows. An essential GTPase which binds GTP, GDP and possibly (p)ppGpp with moderate affinity, with high nucleotide exchange rates and a fairly low GTP hydrolysis rate. Plays a role in control of the cell cycle, stress response, ribosome biogenesis and in those bacteria that undergo differentiation, in morphogenesis control. In Rhodopseudomonas palustris (strain TIE-1), this protein is GTPase Obg.